The sequence spans 1331 residues: uncharacterized protein (1331 aa).

Transmembrane regions (helical) follow at residues 373–393 (VIGV…SLIV), 487–507 (ALFL…LILI), 534–554 (LLIF…SFGI), 579–599 (VVGL…ISLL), 653–673 (LVFL…SFAT), 1206–1226 (VIAV…TTLI), 1255–1275 (IPLF…LIAL), and 1297–1317 (AIGS…LNWL).

The protein belongs to the ABC-4 integral membrane protein family.

The protein localises to the cell membrane. This is an uncharacterized protein from Mycoplasma genitalium (strain ATCC 33530 / DSM 19775 / NCTC 10195 / G37) (Mycoplasmoides genitalium).